We begin with the raw amino-acid sequence, 520 residues long: Sterile alpha motif domain-containing protein 3 (520 aa).

The SAM domain maps to 4-71; it reads WSVEQVCSWL…KYKQNTQGLK (68 aa). Residues 85–114 form a disordered region; the sequence is TEAARDYRDEESSSPARHGEQMPSFYPAEN.

The protein is Sterile alpha motif domain-containing protein 3 (SAMD3) of Homo sapiens (Human).